The following is a 552-amino-acid chain: Glucose-6-phosphate isomerase (552 aa).

E359 serves as the catalytic Proton donor. Catalysis depends on residues H390 and K514.

This sequence belongs to the GPI family.

The protein localises to the cytoplasm. It catalyses the reaction alpha-D-glucose 6-phosphate = beta-D-fructose 6-phosphate. The protein operates within carbohydrate biosynthesis; gluconeogenesis. It participates in carbohydrate degradation; glycolysis; D-glyceraldehyde 3-phosphate and glycerone phosphate from D-glucose: step 2/4. Its function is as follows. Catalyzes the reversible isomerization of glucose-6-phosphate to fructose-6-phosphate. This Streptomyces griseus subsp. griseus (strain JCM 4626 / CBS 651.72 / NBRC 13350 / KCC S-0626 / ISP 5235) protein is Glucose-6-phosphate isomerase.